Consider the following 617-residue polypeptide: V-type proton ATPase catalytic subunit A (617 aa).

257 to 264 (GAFGCGKT) contacts ATP.

This sequence belongs to the ATPase alpha/beta chains family. In terms of assembly, V-ATPase is a heteromultimeric enzyme composed of a peripheral catalytic V1 complex (components A to H) attached to an integral membrane V0 proton pore complex (components: a, c, c', c'', d, e, f and VOA1). In terms of processing, is a probable target for sumoylation.

It is found in the vacuole membrane. The enzyme catalyses ATP + H2O + 4 H(+)(in) = ADP + phosphate + 5 H(+)(out). Functionally, catalytic subunit of the V1 complex of vacuolar(H+)-ATPase (V-ATPase), a multisubunit enzyme composed of a peripheral complex (V1) that hydrolyzes ATP and a membrane integral complex (V0) that translocates protons. V-ATPase is responsible for acidifying and maintaining the pH of intracellular compartments. Mediates oxidative stress response, filamentous growth, and plays an important role in virulence. In Candida albicans (strain SC5314 / ATCC MYA-2876) (Yeast), this protein is V-type proton ATPase catalytic subunit A.